The primary structure comprises 228 residues: 7-cyano-7-deazaguanine synthase (228 aa).

9 to 19 (LSGGPDSTTVL) contributes to the ATP binding site. Zn(2+) is bound by residues Cys-193, Cys-203, Cys-206, and Cys-209.

It belongs to the QueC family. The cofactor is Zn(2+).

It carries out the reaction 7-carboxy-7-deazaguanine + NH4(+) + ATP = 7-cyano-7-deazaguanine + ADP + phosphate + H2O + H(+). It participates in purine metabolism; 7-cyano-7-deazaguanine biosynthesis. Catalyzes the ATP-dependent conversion of 7-carboxy-7-deazaguanine (CDG) to 7-cyano-7-deazaguanine (preQ(0)). This is 7-cyano-7-deazaguanine synthase from Rickettsia massiliae (strain Mtu5).